The primary structure comprises 211 residues: uncharacterized protein (211 aa).

The interval 187–211 (LKVSEQENSEAPVSEPKEDEKTKKD) is disordered. The span at 201–211 (EPKEDEKTKKD) shows a compositional bias: basic and acidic residues.

This is an uncharacterized protein from Spiroplasma citri.